The following is a 1371-amino-acid chain: DNA-directed RNA polymerase subunit beta (1371 aa).

It belongs to the RNA polymerase beta chain family. In terms of assembly, the RNAP catalytic core consists of 2 alpha, 1 beta, 1 beta' and 1 omega subunit. When a sigma factor is associated with the core the holoenzyme is formed, which can initiate transcription.

It catalyses the reaction RNA(n) + a ribonucleoside 5'-triphosphate = RNA(n+1) + diphosphate. In terms of biological role, DNA-dependent RNA polymerase catalyzes the transcription of DNA into RNA using the four ribonucleoside triphosphates as substrates. In Citrifermentans bemidjiense (strain ATCC BAA-1014 / DSM 16622 / JCM 12645 / Bem) (Geobacter bemidjiensis), this protein is DNA-directed RNA polymerase subunit beta.